We begin with the raw amino-acid sequence, 594 residues long: Ferredoxin--nitrite reductase, chloroplastic (594 aa).

Residues 1 to 32 (MASLPVNKIIPSSTTLLSSSNNNRRRNNSSIR) constitute a chloroplast transit peptide. Residues 13–22 (STTLLSSSNN) are compositionally biased toward low complexity. The segment at 13-36 (STTLLSSSNNNRRRNNSSIRCQKA) is disordered. Positions 473, 479, 514, and 518 each coordinate [4Fe-4S] cluster. Cys-518 provides a ligand contact to siroheme.

It belongs to the nitrite and sulfite reductase 4Fe-4S domain family. As to quaternary structure, monomer. Siroheme is required as a cofactor. It depends on [4Fe-4S] cluster as a cofactor.

It is found in the plastid. It localises to the chloroplast. The enzyme catalyses 6 oxidized [2Fe-2S]-[ferredoxin] + NH4(+) + 2 H2O = nitrite + 6 reduced [2Fe-2S]-[ferredoxin] + 8 H(+). The protein operates within nitrogen metabolism; nitrate reduction (assimilation). The protein is Ferredoxin--nitrite reductase, chloroplastic (NIR) of Spinacia oleracea (Spinach).